A 507-amino-acid polypeptide reads, in one-letter code: RNA demethylase ALKBH9B (507 aa).

Disordered regions lie at residues 76–102 and 145–183; these read GSERASNNVDDNYDEKSENGEDCDNHS and QEDEFDEEEEEEEEERDSSRKGFDASSMKTPEKPKLSRD. The span at 89-100 shows a compositional bias: basic and acidic residues; sequence DEKSENGEDCDN. Acidic residues predominate over residues 145–160; the sequence is QEDEFDEEEEEEEEER. A compositionally biased stretch (basic and acidic residues) spans 174-183; the sequence is TPEKPKLSRD. The 98-residue stretch at 317–414 folds into the Fe2OG dioxygenase domain; that stretch reads VPDSCIVNIY…RISITFRKMD (98 aa). 3 residues coordinate Fe cation: histidine 335, aspartate 337, and histidine 396. Arginine 405 serves as a coordination point for 2-oxoglutarate. Residues 432–507 form a disordered region; that stretch reads EPLPLDLNRS…MPRPSRRNYG (76 aa). Residues 440–450 are compositionally biased toward polar residues; the sequence is RSGSTSRFSRL. The segment covering 497–507 has biased composition (basic residues); that stretch reads GMPRPSRRNYG.

It belongs to the alkB family. As to quaternary structure, (Microbial infection) Interacts with the capsid protein ORF3b of the alfalfa mosaic virus (AMV). Fe(2+) is required as a cofactor.

It localises to the cytoplasm. The protein localises to the P-body. It is found in the cytoplasmic granule. It carries out the reaction an N(6)-methyladenosine in mRNA + 2-oxoglutarate + O2 = an adenosine in mRNA + formaldehyde + succinate + CO2. In terms of biological role, dioxygenase that demethylates RNA by oxidative demethylation: specifically demethylates N(6)-methyladenosine (m6A) RNA, the most prevalent internal modification of messenger RNA (mRNA) in higher eukaryotes. Modulates viral infection of the alfalfa mosaic virus (AMV) and the m6A abundance in its genomic RNAs. This chain is RNA demethylase ALKBH9B, found in Arabidopsis thaliana (Mouse-ear cress).